The sequence spans 254 residues: Low affinity immunoglobulin gamma Fc region receptor III-A (254 aa).

A signal peptide spans 1-16; that stretch reads MWQLLLPTALLLLVSA. The Extracellular portion of the chain corresponds to 17-208; the sequence is GMRAEDLPKA…ISSFFPPGYQ (192 aa). Ig-like C2-type domains follow at residues 24–105 and 107–189; these read PKAV…LEVH and GWLL…VNIT. Intrachain disulfides connect Cys-47-Cys-89 and Cys-128-Cys-172. 3 N-linked (GlcNAc...) asparagine glycosylation sites follow: Asn-56, Asn-63, and Asn-82. Residues Asn-180 and Asn-187 are each glycosylated (N-linked (GlcNAc...) asparagine). Residues 209-229 form a helical membrane-spanning segment; that stretch reads VSFCLVMVLLFAVDTGLYFSM. Residues 230–254 are Cytoplasmic-facing; that stretch reads KKSIPSSTRDWEDHKFKWSKDPQDK.

As to quaternary structure, forms a heterooligomeric complex with ITAM-containing signaling subunits, either a homodimer of CD247, a homodimer of FCER1G or a heterodimer of CD247 and FCER1G. Interacts (via transmembrane domain) with signaling subunits; this interaction is a prerequisite for receptor complex expression on the cell surface and intracellular signal transduction. Binds the Fc region of antigen-complexed IgG with a preference for IgG1 and IgG3 isotypes. Interacts with CD2; this interaction is involved in NK cell activation and cytotoxicity. Interacts with S100A4; this interaction inhibits PKC-dependent phosphorylation of FCGR3A. Post-translationally, glycosylated. Glycosylation plays an inhibitory role in the interaction with IgG1 and IgG2. Undergoes rapid ectodomain shedding upon NK cell stimulation. The soluble form is produced by a proteolytic cleavage mediated by ADAM17. Repeated stimulation causes receptor shedding, a mechanism that allows for increased NK cell motility and detachment from opsonized target cells while avoiding activation-induced NK cell apoptosis. In terms of tissue distribution, lymphocytes and monocytes.

The protein resides in the cell membrane. It localises to the secreted. Receptor for the invariable Fc fragment of immunoglobulin gamma (IgG). Optimally activated upon binding of clustered antigen-IgG complexes displayed on cell surfaces, triggers lysis of antibody-coated cells, a process known as antibody-dependent cellular cytotoxicity (ADCC). Does not bind free monomeric IgG, thus avoiding inappropriate effector cell activation in the absence of antigenic trigger. Mediates IgG effector functions on natural killer (NK) cells. Binds antigen-IgG complexes generated upon infection and triggers NK cell-dependent cytokine production and degranulation to limit viral load and propagation. Involved in the generation of memory-like adaptive NK cells capable to produce high amounts of IFNG and to efficiently eliminate virus-infected cells via ADCC. Regulates NK cell survival and proliferation, in particular by preventing NK cell progenitor apoptosis. Fc-binding subunit that associates with CD247 and/or FCER1G adapters to form functional signaling complexes. Following the engagement of antigen-IgG complexes, triggers phosphorylation of immunoreceptor tyrosine-based activation motif (ITAM)-containing adapters with subsequent activation of phosphatidylinositol 3-kinase signaling and sustained elevation of intracellular calcium that ultimately drive NK cell activation. The ITAM-dependent signaling coupled to receptor phosphorylation by PKC mediates robust intracellular calcium flux that leads to production of pro-inflammatory cytokines, whereas in the absence of receptor phosphorylation it mainly activates phosphatidylinositol 3-kinase signaling leading to cell degranulation. Costimulates NK cells and trigger lysis of target cells independently of IgG binding. Mediates the antitumor activities of therapeutic antibodies. Upon ligation on monocytes triggers TNFA-dependent ADCC of IgG-coated tumor cells. Mediates enhanced ADCC in response to afucosylated IgGs. In Macaca fascicularis (Crab-eating macaque), this protein is Low affinity immunoglobulin gamma Fc region receptor III-A (FCGR3A).